We begin with the raw amino-acid sequence, 130 residues long: Lysozyme C (130 aa).

The region spanning lysine 1–leucine 130 is the C-type lysozyme domain. 4 disulfide bridges follow: cysteine 6/cysteine 128, cysteine 30/cysteine 116, cysteine 65/cysteine 81, and cysteine 77/cysteine 95. Catalysis depends on residues glutamate 35 and aspartate 53.

This sequence belongs to the glycosyl hydrolase 22 family. In terms of assembly, monomer.

It carries out the reaction Hydrolysis of (1-&gt;4)-beta-linkages between N-acetylmuramic acid and N-acetyl-D-glucosamine residues in a peptidoglycan and between N-acetyl-D-glucosamine residues in chitodextrins.. Functionally, lysozymes have primarily a bacteriolytic function; those in tissues and body fluids are associated with the monocyte-macrophage system and enhance the activity of immunoagents. This is Lysozyme C (LYZ) from Camelus dromedarius (Dromedary).